A 468-amino-acid polypeptide reads, in one-letter code: Glucose-dependent insulinotropic receptor (468 aa).

Residues 1-6 (MESSFS) lie on the Extracellular side of the membrane. Residues 7–27 (FGVILAVLTILIIAVNALVVV) traverse the membrane as a helical segment. The Cytoplasmic portion of the chain corresponds to 28–37 (AMLLSIYKND). Residues 38-58 (GVGLCFTLNLAVADTLIGVAI) traverse the membrane as a helical segment. Topologically, residues 59–81 (SGLVTDQLSSSAQHTQKTLCSLR) are extracellular. Residues 82–102 (MAFVTSSAAASVLTVMLIAFD) traverse the membrane as a helical segment. At 103 to 125 (RYLAIKQPLRYFQIMNGLVAGGC) the chain is on the cytoplasmic side. The helical transmembrane segment at 126 to 146 (IAGLWLISYLIGFLPLGVSIF) threads the bilayer. The Extracellular portion of the chain corresponds to 147–164 (QQTTYHGPCTFFAVFHPR). A helical membrane pass occupies residues 165-185 (FVLTLSCAGFFPAVLLFVFFY). Over 186-226 (CDMLKIASVHSQHIRKMEHAGAMVGACRPPRPVNDFKAVRT) the chain is Cytoplasmic. The chain crosses the membrane as a helical span at residues 227–247 (VSVLIGSFTLSWSPFLITSIV). The Extracellular segment spans residues 248 to 262 (QVACHKCCLYQVLEK). Residues 263-283 (YLWLLGVGNSLLNPLIYAYWQ) traverse the membrane as a helical segment. At 284-468 (REVRQQLCHM…MSDPLRTCRG (185 aa)) the chain is on the cytoplasmic side.

Belongs to the G-protein coupled receptor 1 family. In terms of tissue distribution, expression restricted to the beta-cells of pancreatic islets.

Its subcellular location is the cell membrane. Receptor for the endogenous fatty-acid ethanolamide oleoylethanolamide (OEA) and lysophosphatidylcholine (LPC). Functions as a glucose-dependent insulinotropic receptor. The activity of this receptor is mediated by G proteins which activate adenylate cyclase. Seems to act through a G(s) mediated pathway. This chain is Glucose-dependent insulinotropic receptor (Gpr119), found in Rattus norvegicus (Rat).